The chain runs to 298 residues: Cyclin-dependent kinase 2 (298 aa).

Residue methionine 1 is modified to N-acetylmethionine. The Protein kinase domain maps to phenylalanine 4 to phenylalanine 286. Lysine 6 bears the N6-acetyllysine mark. ATP is bound at residue isoleucine 10–valine 18. Threonine 14 is modified (phosphothreonine). The residue at position 15 (tyrosine 15) is a Phosphotyrosine; by WEE1. Position 19 is a phosphotyrosine (tyrosine 19). Residues lysine 33, glutamate 81–leucine 83, and aspartate 86 contribute to the ATP site. The active-site Proton acceptor is aspartate 127. ATP-binding positions include lysine 129 to asparagine 132 and aspartate 145. The Mg(2+) site is built by asparagine 132 and aspartate 145. Phosphothreonine; by CAK and CCRK is present on threonine 160.

The protein belongs to the protein kinase superfamily. CMGC Ser/Thr protein kinase family. CDC2/CDKX subfamily. As to quaternary structure, found in a complex with CABLES1, CCNA1 and CCNE1. Interacts with CABLES1. Interacts with UHRF2. Part of a complex consisting of UHRF2, CDK2 and CCNE1. Interacts with the Speedy/Ringo proteins SPDYA and SPDYC. Interaction with SPDYA promotes kinase activation via a conformation change that alleviates obstruction of the substrate-binding cleft by the T-loop. Found in a complex with both SPDYA and CDKN1B/KIP1. Binds to RB1 and CDK7. Binding to CDKN1A (p21) leads to CDK2/cyclin E inactivation at the G1-S phase DNA damage checkpoint, thereby arresting cells at the G1-S transition during DNA repair. Associated with PTPN6 and beta-catenin/CTNNB1. Interacts with CACUL1. May interact with CEP63. Interacts with ANKRD17. Interacts with CEBPA (when phosphorylated). Forms a ternary complex with CCNA2 and CDKN1B; CDKN1B inhibits the kinase activity of CDK2 through conformational rearrangements. Interacts with cyclins A, B1, B3, D, or E. Interacts with CDK2AP2. Mg(2+) is required as a cofactor. In terms of processing, phosphorylated at Thr-160 by CDK7 in a CAK complex. Phosphorylation at Thr-160 promotes kinase activity, whereas phosphorylation at Tyr-15 by WEE1 reduces slightly kinase activity. Phosphorylated on Thr-14 and Tyr-15 during S and G2 phases before being dephosphorylated by CDC25A. Nitrosylated after treatment with nitric oxide (DETA-NO).

The protein resides in the cytoplasm. Its subcellular location is the cytoskeleton. It localises to the microtubule organizing center. It is found in the centrosome. The protein localises to the nucleus. The protein resides in the cajal body. Its subcellular location is the endosome. The catalysed reaction is L-seryl-[protein] + ATP = O-phospho-L-seryl-[protein] + ADP + H(+). The enzyme catalyses L-threonyl-[protein] + ATP = O-phospho-L-threonyl-[protein] + ADP + H(+). Its activity is regulated as follows. Phosphorylation at Thr-14 or Tyr-15 inactivates the enzyme, while phosphorylation at Thr-160 activates it. Stimulated by MYC. Inactivated by CDKN1A (p21). Serine/threonine-protein kinase involved in the control of the cell cycle; essential for meiosis, but dispensable for mitosis. Phosphorylates CABLES1, CTNNB1, CDK2AP2, ERCC6, NBN, USP37, p53/TP53, NPM1, CDK7, RB1, BRCA2, MYC, NPAT, EZH2. Triggers duplication of centrosomes and DNA. Acts at the G1-S transition to promote the E2F transcriptional program and the initiation of DNA synthesis, and modulates G2 progression; controls the timing of entry into mitosis/meiosis by controlling the subsequent activation of cyclin B/CDK1 by phosphorylation, and coordinates the activation of cyclin B/CDK1 at the centrosome and in the nucleus. Crucial role in orchestrating a fine balance between cellular proliferation, cell death, and DNA repair in embryonic stem cells (ESCs). Activity of CDK2 is maximal during S phase and G2; activated by interaction with cyclin E during the early stages of DNA synthesis to permit G1-S transition, and subsequently activated by cyclin A2 (cyclin A1 in germ cells) during the late stages of DNA replication to drive the transition from S phase to mitosis, the G2 phase. EZH2 phosphorylation promotes H3K27me3 maintenance and epigenetic gene silencing. Cyclin E/CDK2 prevents oxidative stress-mediated Ras-induced senescence by phosphorylating MYC. Involved in G1-S phase DNA damage checkpoint that prevents cells with damaged DNA from initiating mitosis; regulates homologous recombination-dependent repair by phosphorylating BRCA2, this phosphorylation is low in S phase when recombination is active, but increases as cells progress towards mitosis. In response to DNA damage, double-strand break repair by homologous recombination a reduction of CDK2-mediated BRCA2 phosphorylation. Involved in regulation of telomere repair by mediating phosphorylation of NBN. Phosphorylation of RB1 disturbs its interaction with E2F1. NPM1 phosphorylation by cyclin E/CDK2 promotes its dissociation from unduplicated centrosomes, thus initiating centrosome duplication. Cyclin E/CDK2-mediated phosphorylation of NPAT at G1-S transition and until prophase stimulates the NPAT-mediated activation of histone gene transcription during S phase. Required for vitamin D-mediated growth inhibition by being itself inactivated. Involved in the nitric oxide- (NO) mediated signaling in a nitrosylation/activation-dependent manner. USP37 is activated by phosphorylation and thus triggers G1-S transition. CTNNB1 phosphorylation regulates insulin internalization. Phosphorylates FOXP3 and negatively regulates its transcriptional activity and protein stability. Phosphorylates ERCC6 which is essential for its chromatin remodeling activity at DNA double-strand breaks. Acts as a regulator of the phosphatidylinositol 3-kinase/protein kinase B signal transduction by mediating phosphorylation of the C-terminus of protein kinase B (PKB/AKT1 and PKB/AKT2), promoting its activation. The protein is Cyclin-dependent kinase 2 (CDK2) of Bos taurus (Bovine).